A 267-amino-acid polypeptide reads, in one-letter code: 3-methyl-2-oxobutanoate hydroxymethyltransferase (267 aa).

Residues Asp45 and Asp84 each coordinate Mg(2+). Residues 45–46, Asp84, and Lys113 contribute to the 3-methyl-2-oxobutanoate site; that span reads DS. Glu115 provides a ligand contact to Mg(2+). The active-site Proton acceptor is the Glu182.

It belongs to the PanB family. As to quaternary structure, homodecamer; pentamer of dimers. Requires Mg(2+) as cofactor.

Its subcellular location is the cytoplasm. It catalyses the reaction 3-methyl-2-oxobutanoate + (6R)-5,10-methylene-5,6,7,8-tetrahydrofolate + H2O = 2-dehydropantoate + (6S)-5,6,7,8-tetrahydrofolate. It participates in cofactor biosynthesis; coenzyme A biosynthesis. In terms of biological role, catalyzes the reversible reaction in which hydroxymethyl group from 5,10-methylenetetrahydrofolate is transferred onto alpha-ketoisovalerate to form ketopantoate. This Saccharolobus islandicus (strain M.16.27) (Sulfolobus islandicus) protein is 3-methyl-2-oxobutanoate hydroxymethyltransferase.